We begin with the raw amino-acid sequence, 447 residues long: Glutamate--tRNA ligase 1 (447 aa).

Residues 10-20 (PSPTGMLHVGN) carry the 'HIGH' region motif. Positions 240-244 (KISKR) match the 'KMSKS' region motif. Residue Lys243 coordinates ATP.

Belongs to the class-I aminoacyl-tRNA synthetase family. Glutamate--tRNA ligase type 1 subfamily. Monomer.

It is found in the cytoplasm. It catalyses the reaction tRNA(Glu) + L-glutamate + ATP = L-glutamyl-tRNA(Glu) + AMP + diphosphate. Its function is as follows. Catalyzes the attachment of glutamate to tRNA(Glu) in a two-step reaction: glutamate is first activated by ATP to form Glu-AMP and then transferred to the acceptor end of tRNA(Glu). This is Glutamate--tRNA ligase 1 from Rickettsia akari (strain Hartford).